A 426-amino-acid polypeptide reads, in one-letter code: Pistil-specific extensin-like protein (426 aa).

The first 23 residues, 1-23 (MAVIISSKVLLIQLFVLVLGSFS), serve as a signal peptide directing secretion. Disordered stretches follow at residues 56 to 109 (GPTF…GSKL) and 121 to 254 (NLPD…AAEP). Pro residues-rich tracts occupy residues 60-94 (VLPP…PLIP), 123-161 (PDVP…PSPP), 168-224 (PPQP…PPPP), and 231-254 (LLPP…AAEP). 3 consecutive repeat copies span residues 69–73 (SPPPP), 76–80 (SPPPP), and 83–87 (SPPPP). The interval 69-182 (SPPPPSPSPP…PAKQPSPPPP (114 aa)) is 4 X 5 AA repeats of S-P(4). Residues 178 to 182 (SPPPP) form repeat 4. The N-linked (GlcNAc...) asparagine glycan is linked to Asn310.

Pistil (stigma and style tissue).

In Nicotiana tabacum (Common tobacco), this protein is Pistil-specific extensin-like protein.